A 142-amino-acid chain; its full sequence is MVLSAEEKALVVGLCGKISGHCDALGGEALDRLFASFGQTRTYFSHFDLSPGSADVKRHGGKVLSAIGEAAKHIDSMDQALSKLSDLHAYNLRVDPGNFQLLSHCIQAVLAAHFPADFTPQCQAAWDKFLAAVSAVLTSKYR.

Residues 2 to 142 enclose the Globin domain; it reads VLSAEEKALV…VSAVLTSKYR (141 aa). His59 is an O2 binding site. His88 is a heme b binding site.

The protein belongs to the globin family. In terms of assembly, heterotetramer of two alpha chains and two beta chains. As to expression, red blood cells.

In terms of biological role, involved in oxygen transport from the lung to the various peripheral tissues. The polypeptide is Hemoglobin larval subunit alpha (Pleurodeles waltl (Iberian ribbed newt)).